The chain runs to 219 residues: MSTSTHALTLQNPIQAPQVTKELSENVILTCLDDIYNWARLSTLYPMMFGTACCFMEFMAAFGPRFDLERFGSIPRATPRQADLMITAGTITMKYAPALVQLYEQIPEPKYVIAMGACTITAGMFSADSPTAVRGVDKLIPVDVYIPGCPPRPEAVIDGIIKLRKKVAGESRQDYTEDLQTHRFHAVRHRMKPVSPILTGQYLRHHEDLTPHHDPLLIK.

Residues cysteine 53, cysteine 54, cysteine 118, and cysteine 149 each coordinate [4Fe-4S] cluster.

It belongs to the complex I 20 kDa subunit family. In terms of assembly, NDH-1 can be composed of about 15 different subunits; different subcomplexes with different compositions have been identified which probably have different functions. It depends on [4Fe-4S] cluster as a cofactor.

The protein resides in the cellular thylakoid membrane. It carries out the reaction a plastoquinone + NADH + (n+1) H(+)(in) = a plastoquinol + NAD(+) + n H(+)(out). The enzyme catalyses a plastoquinone + NADPH + (n+1) H(+)(in) = a plastoquinol + NADP(+) + n H(+)(out). In terms of biological role, NDH-1 shuttles electrons from an unknown electron donor, via FMN and iron-sulfur (Fe-S) centers, to quinones in the respiratory and/or the photosynthetic chain. The immediate electron acceptor for the enzyme in this species is believed to be plastoquinone. Couples the redox reaction to proton translocation, and thus conserves the redox energy in a proton gradient. Cyanobacterial NDH-1 also plays a role in inorganic carbon-concentration. In Synechocystis sp. (strain ATCC 27184 / PCC 6803 / Kazusa), this protein is NAD(P)H-quinone oxidoreductase subunit K 2.